The chain runs to 633 residues: Proline-rich protein LAS17 (633 aa).

The 112-residue stretch at 16-127 (LPKASNKIID…KRVQKRERYA (112 aa)) folds into the WH1 domain. Disordered regions lie at residues 145-545 (REEQ…TTGD) and 563-606 (ALRK…PASL). Over residues 192-215 (AETFDSDQTSSFSDINSTTASAPT) the composition is skewed to low complexity. 2 stretches are compositionally biased toward pro residues: residues 216-225 (TPAPALPPAS) and 238-256 (SLPP…PQHN). Composition is skewed to low complexity over residues 257 to 269 (SPPQ…QPQS) and 307 to 322 (PQQN…RNNR). Threonine 334 carries the phosphothreonine modification. A Phosphoserine modification is found at serine 337. Over residues 342-357 (PAPPPPPRRGPAPPPP) the composition is skewed to pro residues. 3 stretches are compositionally biased toward polar residues: residues 363 to 376 (TSNT…NSLL), 399 to 414 (NVTM…NSNR), and 454 to 465 (PQNTQAPSQATN). The span at 479–488 (QSQIPQSAPS) shows a compositional bias: low complexity. Residues 547–567 (GRDALLASIRGAGGIGALRKV) form the WH2 domain. Serine 588 carries the phosphoserine modification.

In terms of assembly, interacts with KRE6, LSB3, LSB5 and YSC84.

This chain is Proline-rich protein LAS17 (LAS17), found in Saccharomyces cerevisiae (strain ATCC 204508 / S288c) (Baker's yeast).